An 860-amino-acid chain; its full sequence is Probable inorganic carbon transporter subunit DabA (860 aa).

Residues 1 to 32 form a disordered region; that stretch reads MTTTSLGADAAHTHAMVPSAIPPEGSDAAGPD. Residues Cys-369, Asp-371, His-551, and Cys-566 each coordinate Zn(2+).

The protein belongs to the inorganic carbon transporter (TC 9.A.2) DabA family. As to quaternary structure, forms a complex with DabB. It depends on Zn(2+) as a cofactor.

Its subcellular location is the cell inner membrane. In terms of biological role, part of an energy-coupled inorganic carbon pump. This Ralstonia pickettii (strain 12D) protein is Probable inorganic carbon transporter subunit DabA.